Consider the following 547-residue polypeptide: (R)-citramalate synthase (547 aa).

A Pyruvate carboxyltransferase domain is found at leucine 8–alanine 278.

The protein belongs to the alpha-IPM synthase/homocitrate synthase family.

The enzyme catalyses pyruvate + acetyl-CoA + H2O = (3R)-citramalate + CoA + H(+). Its pathway is amino-acid biosynthesis; L-isoleucine biosynthesis; 2-oxobutanoate from pyruvate: step 1/3. Catalyzes the condensation of pyruvate and acetyl-coenzyme A to form (R)-citramalate. This chain is (R)-citramalate synthase, found in Synechocystis sp. (strain ATCC 27184 / PCC 6803 / Kazusa).